A 202-amino-acid polypeptide reads, in one-letter code: Small ribosomal subunit protein uS4 (202 aa).

Residues R23–R42 form a disordered region. The S4 RNA-binding domain maps to M90–E154.

This sequence belongs to the universal ribosomal protein uS4 family. In terms of assembly, part of the 30S ribosomal subunit. Contacts protein S5. The interaction surface between S4 and S5 is involved in control of translational fidelity.

One of the primary rRNA binding proteins, it binds directly to 16S rRNA where it nucleates assembly of the body of the 30S subunit. In terms of biological role, with S5 and S12 plays an important role in translational accuracy. The polypeptide is Small ribosomal subunit protein uS4 (Synechococcus elongatus (strain ATCC 33912 / PCC 7942 / FACHB-805) (Anacystis nidulans R2)).